The chain runs to 67 residues: MQVLVRDNNVDQALKALKKKMQREGIFREMKLRRHYEKPSERKAREAAEAVRRARKMERKRLEREGF.

Residues 37–52 (EKPSERKAREAAEAVR) show a composition bias toward basic and acidic residues. Residues 37-67 (EKPSERKAREAAEAVRRARKMERKRLEREGF) are disordered.

It belongs to the bacterial ribosomal protein bS21 family.

This Gluconacetobacter diazotrophicus (strain ATCC 49037 / DSM 5601 / CCUG 37298 / CIP 103539 / LMG 7603 / PAl5) protein is Small ribosomal subunit protein bS21.